We begin with the raw amino-acid sequence, 140 residues long: Phosphopantetheine adenylyltransferase (140 aa).

Position 9 (Ser9) interacts with substrate. ATP-binding positions include Ser9–Phe10 and His17. The substrate site is built by Lys41, Thr74, and Arg88. ATP is bound by residues Gly89 to Arg91, Glu99, and Lys124 to Thr130.

Belongs to the bacterial CoaD family. Homohexamer. The cofactor is Mg(2+).

The protein localises to the cytoplasm. It carries out the reaction (R)-4'-phosphopantetheine + ATP + H(+) = 3'-dephospho-CoA + diphosphate. The protein operates within cofactor biosynthesis; coenzyme A biosynthesis; CoA from (R)-pantothenate: step 4/5. Reversibly transfers an adenylyl group from ATP to 4'-phosphopantetheine, yielding dephospho-CoA (dPCoA) and pyrophosphate. The polypeptide is Phosphopantetheine adenylyltransferase (Mycoplasma capricolum subsp. capricolum (strain California kid / ATCC 27343 / NCTC 10154)).